The sequence spans 102 residues: Large ribosomal subunit protein bL21 (102 aa).

This sequence belongs to the bacterial ribosomal protein bL21 family. In terms of assembly, part of the 50S ribosomal subunit. Contacts protein L20.

Functionally, this protein binds to 23S rRNA in the presence of protein L20. This Lactiplantibacillus plantarum (strain ATCC BAA-793 / NCIMB 8826 / WCFS1) (Lactobacillus plantarum) protein is Large ribosomal subunit protein bL21.